Consider the following 260-residue polypeptide: MNTTHVPEPHRTEQHTENQPHWKKILGIAPFVSIAFPAVMYFILTKDSFKDSPFLKFITVLLPYLHPPVLHLLLLHTNWRKTHKSKHTILYCLVNLLLLAFAVANILSIVALIVDKQKRTDDLLLHSIILPSFFIPPAYLLSTSCCLVPGQIGFTDTGINVIIDILILICPAISLVLVDEKSKYYPYSTAIPSILILVRLFREKCSPPKQSSPPIPTWRVAAFVFILVLAVLVYGLLGSGSIITLYDHFHPPKGADATSS.

Belongs to the UPF0328 family.

The protein is UPF0328 protein ECU07_1870/ECU10_0030 of Encephalitozoon cuniculi (strain GB-M1) (Microsporidian parasite).